The sequence spans 127 residues: MAIVGLGTDIVEIERITAHVARSGDKLAKRVLTDAEFDIYQQHSQPSRYLAKRFAAKEAAAKALGTGIGRGVSFQHIHIGNTPDGAPTIDFTEGAQQRLALLNGVVGHISIADEKSYAIATVILESR.

The Mg(2+) site is built by aspartate 9 and glutamate 58.

The protein belongs to the P-Pant transferase superfamily. AcpS family. Requires Mg(2+) as cofactor.

Its subcellular location is the cytoplasm. The enzyme catalyses apo-[ACP] + CoA = holo-[ACP] + adenosine 3',5'-bisphosphate + H(+). Its function is as follows. Transfers the 4'-phosphopantetheine moiety from coenzyme A to a Ser of acyl-carrier-protein. This Shewanella sp. (strain ANA-3) protein is Holo-[acyl-carrier-protein] synthase.